A 547-amino-acid polypeptide reads, in one-letter code: MSELIRVPDIGNGEGEVIELLVKPGDKVEADQSLLTLESDKASMEIPSPKAGVVKSIKAKVGDTLKEGDEILELEVEGGEQPAEAKAEAAPAQPEAPKAEAPAPAPSESKPAAPAAASVQDIKVPDIGSAGKANVIEVMVKAGDTVEADQSLITLESDKASMEIPSPASGVVESVSIKVGDEVGTGDLILKLKVEGAAPAAEEQPAAAPAQAAAPAAEQKPAAAAPAPAKADTPAPVGAPSRDGAKVHAGPAVRMLAREFGVELSEVKASGPKGRILKEDVQVFVKEQLQRAKSGGAGATGGAGIPPIPEVDFSKFGEVEEVAMTRLMQVGAANLHRSWLNVPHVTQFDQSDITDMEAFRVAQKAAAEKAGVKLTVLPILLKACAHLLKELPDFNSSLAPSGKALIRKKYVHIGFAVDTPDGLLVPVIRDVDRKSLLQLAAEAADLADKARNKKLSADAMQGACFTISSLGHIGGTGFTPIVNAPEVAILGVSKATMQPVWDGKAFQPRLMLPLSLSYDHRVINGAAAARFTKRLGELLADIRTLLL.

Residues 2 to 75 (SELIRVPDIG…KEGDEILELE (74 aa)) form the Lipoyl-binding 1 domain. K41 is subject to N6-lipoyllysine. The tract at residues 75-117 (EVEGGEQPAEAKAEAAPAQPEAPKAEAPAPAPSESKPAAPAAA) is disordered. The segment covering 80-117 (EQPAEAKAEAAPAQPEAPKAEAPAPAPSESKPAAPAAA) has biased composition (low complexity). The region spanning 119–193 (VQDIKVPDIG…GTGDLILKLK (75 aa)) is the Lipoyl-binding 2 domain. An N6-lipoyllysine modification is found at K159. Residues 202–231 (EEQPAAAPAQAAAPAAEQKPAAAAPAPAKA) show a composition bias toward low complexity. The interval 202-248 (EEQPAAAPAQAAAPAAEQKPAAAAPAPAKADTPAPVGAPSRDGAKVH) is disordered. Positions 248–285 (HAGPAVRMLAREFGVELSEVKASGPKGRILKEDVQVFV) constitute a Peripheral subunit-binding (PSBD) domain. Residue H520 is part of the active site.

This sequence belongs to the 2-oxoacid dehydrogenase family. As to quaternary structure, forms a 24-polypeptide structural core with octahedral symmetry. (R)-lipoate serves as cofactor.

The catalysed reaction is N(6)-[(R)-dihydrolipoyl]-L-lysyl-[protein] + acetyl-CoA = N(6)-[(R)-S(8)-acetyldihydrolipoyl]-L-lysyl-[protein] + CoA. Its function is as follows. The pyruvate dehydrogenase complex catalyzes the overall conversion of pyruvate to acetyl-CoA and CO(2). It contains multiple copies of three enzymatic components: pyruvate dehydrogenase (E1), dihydrolipoamide acetyltransferase (E2) and lipoamide dehydrogenase (E3). This is Dihydrolipoyllysine-residue acetyltransferase component of pyruvate dehydrogenase complex (aceF) from Pseudomonas aeruginosa (strain ATCC 15692 / DSM 22644 / CIP 104116 / JCM 14847 / LMG 12228 / 1C / PRS 101 / PAO1).